An 830-amino-acid polypeptide reads, in one-letter code: Beta-glucosidase A (830 aa).

The active site involves Asp-769.

It belongs to the glycosyl hydrolase 3 family.

The enzyme catalyses Hydrolysis of terminal, non-reducing beta-D-glucosyl residues with release of beta-D-glucose.. Functionally, b.fibrisolvens beta-glucosidase hydrolyzes cellobiose to a limited extent, cellotriose to cellobiose and glucose, and cellotetraose and cellopentaose to predominantly glucose. The sequence is that of Beta-glucosidase A (bglA) from Butyrivibrio fibrisolvens.